We begin with the raw amino-acid sequence, 465 residues long: Ribosomal oxygenase 2 (465 aa).

The JmjC domain maps to 139 to 271 (QPQRYKDELW…NSWGDCLLDS (133 aa)). Histidine 179, aspartate 181, and histidine 240 together coordinate Fe cation. At serine 309 the chain carries Phosphoserine.

Belongs to the ROX family. MINA53 subfamily. Requires Fe(2+) as cofactor. As to expression, predominantly expressed in testis. Expressed at high levels in spleen, thymus, and colon, but barely detectable in brain, skeletal muscle, and seminal vesicle (at protein level).

The protein resides in the nucleus. Its subcellular location is the nucleolus. The enzyme catalyses L-histidyl-[ribosomal protein uL15] + 2-oxoglutarate + O2 = (3S)-3-hydroxy-L-histidyl-[ribosomal protein uL15] + succinate + CO2. It carries out the reaction L-histidyl-[protein] + 2-oxoglutarate + O2 = (3S)-3-hydroxy-L-histidyl-[protein] + succinate + CO2. In terms of biological role, oxygenase that can act as both a histone lysine demethylase and a ribosomal histidine hydroxylase. Is involved in the demethylation of trimethylated 'Lys-9' on histone H3 (H3K9me3), leading to an increase in ribosomal RNA expression. Also catalyzes the hydroxylation of 60S ribosomal protein L27a on 'His-39'. May play an important role in cell growth and survival. May be involved in ribosome biogenesis, most likely during the assembly process of pre-ribosomal particles. The sequence is that of Ribosomal oxygenase 2 from Mus musculus (Mouse).